We begin with the raw amino-acid sequence, 385 residues long: Cytochrome b (385 aa).

Transmembrane regions (helical) follow at residues Phe-32–Met-52, Trp-76–Gly-98, Ala-113–Val-133, and Phe-179–Ile-199. The heme b site is built by His-82 and His-96. Heme b is bound by residues His-183 and His-197. His-202 is an a ubiquinone binding site. A run of 4 helical transmembrane segments spans residues Tyr-226–Phe-246, Leu-290–Asp-310, Leu-322–Ala-342, and Phe-349–Pro-369.

The protein belongs to the cytochrome b family. As to quaternary structure, fungal cytochrome b-c1 complex contains 10 subunits; 3 respiratory subunits, 2 core proteins and 5 low-molecular weight proteins. Cytochrome b-c1 complex is a homodimer. Heme b is required as a cofactor.

The protein localises to the mitochondrion inner membrane. Functionally, component of the ubiquinol-cytochrome c reductase complex (complex III or cytochrome b-c1 complex) that is part of the mitochondrial respiratory chain. The b-c1 complex mediates electron transfer from ubiquinol to cytochrome c. Contributes to the generation of a proton gradient across the mitochondrial membrane that is then used for ATP synthesis. This is Cytochrome b (cob) from Akanthomyces muscarius (Entomopathogenic fungus).